The following is a 291-amino-acid chain: MEMO1 family protein PH1626 (291 aa).

Belongs to the MEMO1 family.

The polypeptide is MEMO1 family protein PH1626 (Pyrococcus horikoshii (strain ATCC 700860 / DSM 12428 / JCM 9974 / NBRC 100139 / OT-3)).